We begin with the raw amino-acid sequence, 542 residues long: Chaperonin GroEL (542 aa).

ATP is bound by residues 29–32, 86–90, glycine 413, and aspartate 494; these read TLGP and DGTTT.

The protein belongs to the chaperonin (HSP60) family. As to quaternary structure, forms a cylinder of 14 subunits composed of two heptameric rings stacked back-to-back. Interacts with the co-chaperonin GroES.

It is found in the cytoplasm. The catalysed reaction is ATP + H2O + a folded polypeptide = ADP + phosphate + an unfolded polypeptide.. Its function is as follows. Together with its co-chaperonin GroES, plays an essential role in assisting protein folding. The GroEL-GroES system forms a nano-cage that allows encapsulation of the non-native substrate proteins and provides a physical environment optimized to promote and accelerate protein folding. The sequence is that of Chaperonin GroEL from Endomicrobium trichonymphae.